Here is a 302-residue protein sequence, read N- to C-terminus: Glutaminase (302 aa).

Substrate-binding residues include serine 61, asparagine 111, glutamate 155, asparagine 162, tyrosine 186, tyrosine 238, and valine 256.

This sequence belongs to the glutaminase family. As to quaternary structure, homotetramer.

It carries out the reaction L-glutamine + H2O = L-glutamate + NH4(+). This chain is Glutaminase, found in Stutzerimonas stutzeri (strain A1501) (Pseudomonas stutzeri).